A 129-amino-acid chain; its full sequence is Cocaine- and amphetamine-regulated transcript protein (129 aa).

A signal peptide spans 1–27; sequence MESSRLRLLPVLGAALLLLLPLLGAGA. The residue at position 41 (tyrosine 41) is a Phosphotyrosine. At serine 48 the chain carries Phosphoserine. Intrachain disulfides connect cysteine 95/cysteine 113, cysteine 101/cysteine 121, and cysteine 115/cysteine 128.

Belongs to the CART family. In terms of tissue distribution, neuroendocrine tissues. Predominantly expressed in the hypothalamus, pituitary, and longitudinal muscle-myenteric plexus. Abundant expression is also seen in the midbrain/thalamus and eye. A lower level expression is seen in the other brain regions and adrenal.

It is found in the secreted. Satiety factor closely associated with the actions of leptin and neuropeptide y; this anorectic peptide inhibits both normal and starvation-induced feeding and completely blocks the feeding response induced by neuropeptide Y and regulated by leptin in the hypothalamus. The sequence is that of Cocaine- and amphetamine-regulated transcript protein (Cartpt) from Rattus norvegicus (Rat).